A 177-amino-acid chain; its full sequence is Dual-action ribosomal maturation protein DarP (177 aa).

Residues Met1–Asp26 form a disordered region.

Belongs to the DarP family.

It localises to the cytoplasm. Functionally, member of a network of 50S ribosomal subunit biogenesis factors which assembles along the 30S-50S interface, preventing incorrect 23S rRNA structures from forming. Promotes peptidyl transferase center (PTC) maturation. This Shewanella sp. (strain ANA-3) protein is Dual-action ribosomal maturation protein DarP.